The sequence spans 367 residues: MNDYNSHILQWKKTIMTITTLSRQNIQALTPYQSARKLGGNGTIWLNANEYPTSPEFQLSGKDLNRYPEPQPQRVVQAYANYAGVSTENVLVTRGGDEGIELIIHTFCEPKQDAILFCPPTYGMYAVSAETAGVLSKTVPLTDDFQLNLPEIKNHLNDVKVVFVCSPNNPTGNLLKQSDILDLLQITAGKAIVVVDEAYIEFCPEASVINLLKNYPHLAIIRTLSKAFALAGLRCGFVLANPELIDILSKVIAPYPIPVPSADLAEQALRPSNIATVQALTQELLSNRQWLAKALLVLHQVEKVYESEANYLLIKCQNGQAVFKALWEQGIILRDQNKTLHLQNCIRITVGTRNECEKVVEAIKEVK.

K226 bears the N6-(pyridoxal phosphate)lysine mark.

This sequence belongs to the class-II pyridoxal-phosphate-dependent aminotransferase family. Histidinol-phosphate aminotransferase subfamily. Homodimer. Pyridoxal 5'-phosphate is required as a cofactor.

It carries out the reaction L-histidinol phosphate + 2-oxoglutarate = 3-(imidazol-4-yl)-2-oxopropyl phosphate + L-glutamate. Its pathway is amino-acid biosynthesis; L-histidine biosynthesis; L-histidine from 5-phospho-alpha-D-ribose 1-diphosphate: step 7/9. In Haemophilus influenzae (strain ATCC 51907 / DSM 11121 / KW20 / Rd), this protein is Histidinol-phosphate aminotransferase 1 (hisC1).